The chain runs to 239 residues: RNA-binding protein 38 (239 aa).

The 78-residue stretch at T34–L111 folds into the RRM domain.

It belongs to the RBM38 family.

It localises to the cytoplasm. The protein localises to the cytosol. It is found in the nucleus. In terms of biological role, RNA-binding protein that specifically bind the 3'-UTR of CDKN1A transcripts, leading to maintain the stability of CDKN1A transcripts, thereby acting as a mediator of the p53/TP53 family to regulate CDKN1A. CDKN1A is a cyclin-dependent kinase inhibitor transcriptionally regulated by the p53/TP53 family to induce cell cycle arrest. Isoform 1, but not isoform 2, has the ability to induce cell cycle arrest in G1 and maintain the stability of CDKN1A transcripts induced by p53/TP53. Also acts as a mRNA splicing factor. Specifically regulates the expression of FGFR2-IIIb, an epithelial cell-specific isoform of FGFR2. Plays a role in myogenic differentiation. (Microbial infection) Essential factor for the splicing of the pre-mRNAs of human parvovirus B19 (B19V) and for the expression of B19V 11-kDa protein, which enhances viral replication. This chain is RNA-binding protein 38 (RBM38), found in Homo sapiens (Human).